The chain runs to 327 residues: Cobalamin biosynthesis protein CobD (327 aa).

A run of 4 helical transmembrane segments spans residues 61–78 (MWLT…GLVI), 80–102 (SILP…ILLA), 160–182 (GIVA…YKFI), and 300–322 (AALV…ASLV).

The protein belongs to the CobD/CbiB family.

The protein resides in the cell membrane. Its pathway is cofactor biosynthesis; adenosylcobalamin biosynthesis. Functionally, converts cobyric acid to cobinamide by the addition of aminopropanol on the F carboxylic group. The protein is Cobalamin biosynthesis protein CobD of Brucella melitensis biotype 1 (strain ATCC 23456 / CCUG 17765 / NCTC 10094 / 16M).